Reading from the N-terminus, the 544-residue chain is Chaperonin GroEL 1 (544 aa).

ATP-binding positions include 29–32, 86–90, glycine 413, 479–481, and aspartate 495; these read TLGP, DGTTT, and NAA.

It belongs to the chaperonin (HSP60) family. Forms a cylinder of 14 subunits composed of two heptameric rings stacked back-to-back. Interacts with the co-chaperonin GroES.

The protein localises to the cytoplasm. The catalysed reaction is ATP + H2O + a folded polypeptide = ADP + phosphate + an unfolded polypeptide.. Together with its co-chaperonin GroES, plays an essential role in assisting protein folding. The GroEL-GroES system forms a nano-cage that allows encapsulation of the non-native substrate proteins and provides a physical environment optimized to promote and accelerate protein folding. The protein is Chaperonin GroEL 1 of Parasynechococcus marenigrum (strain WH8102).